Consider the following 276-residue polypeptide: 4-hydroxy-3-methylbut-2-enyl diphosphate reductase (276 aa).

Cys12 contributes to the [4Fe-4S] cluster binding site. Residues His36 and His70 each contribute to the (2E)-4-hydroxy-3-methylbut-2-enyl diphosphate site. 2 residues coordinate dimethylallyl diphosphate: His36 and His70. Residues His36 and His70 each coordinate isopentenyl diphosphate. Cys92 is a [4Fe-4S] cluster binding site. (2E)-4-hydroxy-3-methylbut-2-enyl diphosphate is bound at residue His120. His120 is a binding site for dimethylallyl diphosphate. His120 is a binding site for isopentenyl diphosphate. The active-site Proton donor is Glu122. Thr158 serves as a coordination point for (2E)-4-hydroxy-3-methylbut-2-enyl diphosphate. Cys186 provides a ligand contact to [4Fe-4S] cluster. 4 residues coordinate (2E)-4-hydroxy-3-methylbut-2-enyl diphosphate: Ser214, Ser215, Asn216, and Ser258. Dimethylallyl diphosphate-binding residues include Ser214, Ser215, Asn216, and Ser258. Ser214, Ser215, Asn216, and Ser258 together coordinate isopentenyl diphosphate.

The protein belongs to the IspH family. It depends on [4Fe-4S] cluster as a cofactor.

It carries out the reaction isopentenyl diphosphate + 2 oxidized [2Fe-2S]-[ferredoxin] + H2O = (2E)-4-hydroxy-3-methylbut-2-enyl diphosphate + 2 reduced [2Fe-2S]-[ferredoxin] + 2 H(+). The enzyme catalyses dimethylallyl diphosphate + 2 oxidized [2Fe-2S]-[ferredoxin] + H2O = (2E)-4-hydroxy-3-methylbut-2-enyl diphosphate + 2 reduced [2Fe-2S]-[ferredoxin] + 2 H(+). The protein operates within isoprenoid biosynthesis; dimethylallyl diphosphate biosynthesis; dimethylallyl diphosphate from (2E)-4-hydroxy-3-methylbutenyl diphosphate: step 1/1. It participates in isoprenoid biosynthesis; isopentenyl diphosphate biosynthesis via DXP pathway; isopentenyl diphosphate from 1-deoxy-D-xylulose 5-phosphate: step 6/6. In terms of biological role, catalyzes the conversion of 1-hydroxy-2-methyl-2-(E)-butenyl 4-diphosphate (HMBPP) into a mixture of isopentenyl diphosphate (IPP) and dimethylallyl diphosphate (DMAPP). Acts in the terminal step of the DOXP/MEP pathway for isoprenoid precursor biosynthesis. This Wolinella succinogenes (strain ATCC 29543 / DSM 1740 / CCUG 13145 / JCM 31913 / LMG 7466 / NCTC 11488 / FDC 602W) (Vibrio succinogenes) protein is 4-hydroxy-3-methylbut-2-enyl diphosphate reductase.